A 245-amino-acid chain; its full sequence is tRNA pseudouridine synthase A (245 aa).

The Nucleophile role is filled by D52. Y111 is a substrate binding site.

Belongs to the tRNA pseudouridine synthase TruA family. In terms of assembly, homodimer.

It catalyses the reaction uridine(38/39/40) in tRNA = pseudouridine(38/39/40) in tRNA. Functionally, formation of pseudouridine at positions 38, 39 and 40 in the anticodon stem and loop of transfer RNAs. The polypeptide is tRNA pseudouridine synthase A (Rhodopseudomonas palustris (strain HaA2)).